A 277-amino-acid chain; its full sequence is Adenylate kinase (277 aa).

72-77 (GAGKGT) provides a ligand contact to ATP. An NMP region spans residues 92–121 (ATGDMLRSQVAKQTALGVQAKKIMDQGGLV). Residues threonine 93, arginine 98, 119–121 (GLV), 148–151 (GFPR), and glutamine 155 each bind AMP. The LID stretch occupies residues 189 to 226 (GRLVHPASGRSYHKLFNPPKVAMTDDVTGDPLVQRSDD). Residues arginine 190 and 199-200 (SY) contribute to the ATP site. Positions 223 and 234 each coordinate AMP. Position 262 (glutamine 262) interacts with ATP.

Belongs to the adenylate kinase family. AK2 subfamily. As to quaternary structure, monomer.

Its subcellular location is the cytoplasm. The protein resides in the cytosol. It is found in the mitochondrion intermembrane space. The enzyme catalyses AMP + ATP = 2 ADP. Catalyzes the reversible transfer of the terminal phosphate group between ATP and AMP. Plays an important role in cellular energy homeostasis and in adenine nucleotide metabolism. Adenylate kinase activity is critical for regulation of the phosphate utilization and the AMP de novo biosynthesis pathways. The sequence is that of Adenylate kinase from Eremothecium gossypii (strain ATCC 10895 / CBS 109.51 / FGSC 9923 / NRRL Y-1056) (Yeast).